The chain runs to 159 residues: Protein-export protein SecB (159 aa).

Belongs to the SecB family. As to quaternary structure, homotetramer, a dimer of dimers. One homotetramer interacts with 1 SecA dimer.

The protein localises to the cytoplasm. Its function is as follows. One of the proteins required for the normal export of preproteins out of the cell cytoplasm. It is a molecular chaperone that binds to a subset of precursor proteins, maintaining them in a translocation-competent state. It also specifically binds to its receptor SecA. This chain is Protein-export protein SecB, found in Pseudomonas fluorescens (strain ATCC BAA-477 / NRRL B-23932 / Pf-5).